A 227-amino-acid chain; its full sequence is Cytidylate kinase (227 aa).

12–20 is a binding site for ATP; sequence GPSGAGKGT.

The protein belongs to the cytidylate kinase family. Type 1 subfamily.

The protein resides in the cytoplasm. The catalysed reaction is CMP + ATP = CDP + ADP. The enzyme catalyses dCMP + ATP = dCDP + ADP. This is Cytidylate kinase from Shigella sonnei (strain Ss046).